The primary structure comprises 474 residues: Pyruvate kinase (474 aa).

Substrate is bound at residue arginine 32. The K(+) site is built by asparagine 34, serine 36, and aspartate 66. 34–37 (NFSH) lines the ATP pocket. ATP is bound by residues arginine 73 and lysine 155. Mg(2+) is bound at residue glutamate 221. 3 residues coordinate substrate: glycine 244, aspartate 245, and threonine 277. Aspartate 245 is a binding site for Mg(2+).

Belongs to the pyruvate kinase family. In terms of assembly, homotetramer. It depends on Mg(2+) as a cofactor. K(+) is required as a cofactor.

It carries out the reaction pyruvate + ATP = phosphoenolpyruvate + ADP + H(+). Its pathway is carbohydrate degradation; glycolysis; pyruvate from D-glyceraldehyde 3-phosphate: step 5/5. This Clostridium perfringens (strain 13 / Type A) protein is Pyruvate kinase (pykF).